Consider the following 496-residue polypeptide: Cobyric acid synthase (496 aa).

Positions Thr258–Leu427 constitute a GATase cobBQ-type domain. Cys339 acts as the Nucleophile in catalysis. Residue His419 is part of the active site.

This sequence belongs to the CobB/CobQ family. CobQ subfamily.

It functions in the pathway cofactor biosynthesis; adenosylcobalamin biosynthesis. Catalyzes amidations at positions B, D, E, and G on adenosylcobyrinic A,C-diamide. NH(2) groups are provided by glutamine, and one molecule of ATP is hydrogenolyzed for each amidation. This chain is Cobyric acid synthase, found in Mycolicibacterium smegmatis (strain ATCC 700084 / mc(2)155) (Mycobacterium smegmatis).